A 241-amino-acid chain; its full sequence is Orotidine 5'-phosphate decarboxylase (241 aa).

Substrate contacts are provided by residues D16, K37, 64-73 (DLKFHDIPTT), T128, R190, Q199, G219, and R220. Residue K66 is the Proton donor of the active site.

The protein belongs to the OMP decarboxylase family. Type 1 subfamily. In terms of assembly, homodimer.

The enzyme catalyses orotidine 5'-phosphate + H(+) = UMP + CO2. Its pathway is pyrimidine metabolism; UMP biosynthesis via de novo pathway; UMP from orotate: step 2/2. Functionally, catalyzes the decarboxylation of orotidine 5'-monophosphate (OMP) to uridine 5'-monophosphate (UMP). This Prochlorococcus marinus (strain NATL1A) protein is Orotidine 5'-phosphate decarboxylase.